We begin with the raw amino-acid sequence, 734 residues long: Photosystem I P700 chlorophyll a apoprotein A2 (734 aa).

Transmembrane regions (helical) follow at residues 46-69 (IFASHFGQLAIIFLWTSGNLFHVA), 135-158 (LYTGALFLLFLSAISLIAGWLHLQ), 175-199 (LNHHLSGLFGVSSLAWTGHLVHVAI), 273-291 (IAHHHLAIAFIFLVAGHMY), 330-353 (LHFQLGLALASLGVITSLVAQHMY), 369-395 (AALYTHHQYIAGFIMTGAFAHGAIFFI), 417-439 (AIISHLSWASLFLGFHTLGLYVH), and 517-535 (FLVHHAIALGLHTTTLILV). Residues cysteine 559 and cysteine 568 each contribute to the [4Fe-4S] cluster site. A run of 2 helical transmembrane segments spans residues 575–596 (AFYLAVFWMLNTIGWVTFYWHW) and 643–665 (LSVWAWMFLFGHLVWATGFMFLI). Histidine 654, methionine 662, and tyrosine 670 together coordinate chlorophyll a. Tryptophan 671 is a phylloquinone binding site. A helical membrane pass occupies residues 707-727 (LVGLAHFSVGYIFTYAAFLIA).

It belongs to the PsaA/PsaB family. In terms of assembly, the PsaA/B heterodimer binds the P700 chlorophyll special pair and subsequent electron acceptors. PSI consists of a core antenna complex that captures photons, and an electron transfer chain that converts photonic excitation into a charge separation. The eukaryotic PSI reaction center is composed of at least 11 subunits. P700 is a chlorophyll a/chlorophyll a' dimer, A0 is one or more chlorophyll a, A1 is one or both phylloquinones and FX is a shared 4Fe-4S iron-sulfur center. serves as cofactor.

It is found in the plastid. Its subcellular location is the chloroplast thylakoid membrane. It carries out the reaction reduced [plastocyanin] + hnu + oxidized [2Fe-2S]-[ferredoxin] = oxidized [plastocyanin] + reduced [2Fe-2S]-[ferredoxin]. PsaA and PsaB bind P700, the primary electron donor of photosystem I (PSI), as well as the electron acceptors A0, A1 and FX. PSI is a plastocyanin-ferredoxin oxidoreductase, converting photonic excitation into a charge separation, which transfers an electron from the donor P700 chlorophyll pair to the spectroscopically characterized acceptors A0, A1, FX, FA and FB in turn. Oxidized P700 is reduced on the lumenal side of the thylakoid membrane by plastocyanin. The sequence is that of Photosystem I P700 chlorophyll a apoprotein A2 from Solanum bulbocastanum (Wild potato).